We begin with the raw amino-acid sequence, 301 residues long: Ribosomal RNA small subunit methyltransferase H (301 aa).

S-adenosyl-L-methionine is bound by residues 35-37 (GGH), Asp55, Phe84, Asp105, and Gln112.

This sequence belongs to the methyltransferase superfamily. RsmH family.

Its subcellular location is the cytoplasm. The enzyme catalyses cytidine(1402) in 16S rRNA + S-adenosyl-L-methionine = N(4)-methylcytidine(1402) in 16S rRNA + S-adenosyl-L-homocysteine + H(+). Specifically methylates the N4 position of cytidine in position 1402 (C1402) of 16S rRNA. The polypeptide is Ribosomal RNA small subunit methyltransferase H (Chloroflexus aurantiacus (strain ATCC 29366 / DSM 635 / J-10-fl)).